The primary structure comprises 148 residues: uncharacterized protein (148 aa).

Positions 4 to 65 (LDRVDMQLVK…IPDIDKLGYM (62 aa)) constitute an HTH asnC-type domain. A DNA-binding region (H-T-H motif) is located at residues 23–42 (YRELADILNTTRQRIARRID).

This is an uncharacterized protein from Pyrococcus horikoshii (strain ATCC 700860 / DSM 12428 / JCM 9974 / NBRC 100139 / OT-3).